Reading from the N-terminus, the 44-residue chain is Large ribosomal subunit protein bL34 (44 aa).

Basic residues-rich tracts occupy residues methionine 1–methionine 22 and isoleucine 31–valine 44. A disordered region spans residues methionine 1–valine 44.

The protein belongs to the bacterial ribosomal protein bL34 family.

The sequence is that of Large ribosomal subunit protein bL34 from Nostoc punctiforme (strain ATCC 29133 / PCC 73102).